Here is a 368-residue protein sequence, read N- to C-terminus: Histidinol-phosphate aminotransferase (368 aa).

At lysine 228 the chain carries N6-(pyridoxal phosphate)lysine.

It belongs to the class-II pyridoxal-phosphate-dependent aminotransferase family. Histidinol-phosphate aminotransferase subfamily. The cofactor is pyridoxal 5'-phosphate.

It catalyses the reaction L-histidinol phosphate + 2-oxoglutarate = 3-(imidazol-4-yl)-2-oxopropyl phosphate + L-glutamate. It functions in the pathway amino-acid biosynthesis; L-histidine biosynthesis; L-histidine from 5-phospho-alpha-D-ribose 1-diphosphate: step 7/9. This Methanosarcina mazei (strain ATCC BAA-159 / DSM 3647 / Goe1 / Go1 / JCM 11833 / OCM 88) (Methanosarcina frisia) protein is Histidinol-phosphate aminotransferase.